Here is a 237-residue protein sequence, read N- to C-terminus: Ribonuclease 3 (237 aa).

An RNase III domain is found at 7–135; sequence IKEVEAKLKF…ILGAVYLDGG (129 aa). A Mg(2+)-binding site is contributed by Glu-48. The active site involves Asp-52. The Mg(2+) site is built by Asn-121 and Glu-124. Glu-124 is an active-site residue. Positions 160–229 constitute a DRBM domain; that stretch reads NPKNRLQQLT…AQEALDANDY (70 aa).

This sequence belongs to the ribonuclease III family. As to quaternary structure, homodimer. The cofactor is Mg(2+).

Its subcellular location is the cytoplasm. The enzyme catalyses Endonucleolytic cleavage to 5'-phosphomonoester.. Its function is as follows. Digests double-stranded RNA. Involved in the processing of primary rRNA transcript to yield the immediate precursors to the large and small rRNAs (23S and 16S). Processes some mRNAs, and tRNAs when they are encoded in the rRNA operon. Processes pre-crRNA and tracrRNA of type II CRISPR loci if present in the organism. This chain is Ribonuclease 3, found in Chlamydia felis (strain Fe/C-56) (Chlamydophila felis).